A 978-amino-acid polypeptide reads, in one-letter code: Transcription factor MYCGRDRAFT_87993 (978 aa).

C2H2-type zinc fingers lie at residues 2–24 and 30–52; these read VFCTYCGQSFTRDEHLERHILTH and FKCFTCHMSFARRDLLQRHYTVH. Residues 79 to 105 constitute a DNA-binding region (zn(2)-C6 fungal-type); the sequence is CSNCAKTKTKCDKKFPCSRCAGRNLRC. Disordered regions lie at residues 113–231 and 426–445; these read ASKN…SPRF and THREGRGTSNGSHSPNPSGA. Residues 152-165 show a composition bias toward low complexity; it reads SSSPSSQKSGTPIS. Positions 432-445 are enriched in polar residues; the sequence is GTSNGSHSPNPSGA.

The protein localises to the nucleus. Functionally, transcription factor; part of the gene cluster 29 that mediates the biosynthesis of dihydroxynaphthalene (DHN)-melanin, a bluish-green pigment forming a dark layer in the conidial wall that protects the conidia from UV radiations. This Zymoseptoria tritici (strain CBS 115943 / IPO323) (Speckled leaf blotch fungus) protein is Transcription factor MYCGRDRAFT_87993.